The sequence spans 727 residues: Putative E3 ubiquitin-protein ligase UNKL (727 aa).

Residues 1-21 (MPSVSKAAAAALSGSPPQTEK) form a disordered region. 4 C3H1-type zinc fingers span residues 75–104 (YSPD…HRTT), 115–145 (YYKT…HGPL), 243–277 (QYRS…HSRT), and 285–313 (IYKS…HTEK). The span at 330-339 (STSAYSSQPG) shows a compositional bias: polar residues. Disordered regions lie at residues 330–360 (STSA…DSKQ), 446–514 (LTGP…ATLG), and 543–562 (SPSP…SPNS). Residues 463-495 (SLPRSPSLHSSSSLSTSPLSSLSQSLSGPLVSS) are compositionally biased toward low complexity. Residues 686-721 (CVACQERAHGTVLRPCQHRVLCEPCAASTPECPYCK) form an RING-type zinc finger.

Belongs to the unkempt family. Interacts with the GTP-bound form of Rac1. Interacts with Baf60b/Smarcd2. Ubiquitination is enhanced by activated Rac1. The presence of the RING finger domain is not essential for ubiquitination to occur. In terms of tissue distribution, ubiquitous.

The protein localises to the cytoplasm. It localises to the nucleus. It functions in the pathway protein modification; protein ubiquitination. Functionally, may participate in a protein complex showing an E3 ligase activity regulated by Rac1. Ubiquitination is directed towards itself and possibly other substrates, such as Baf60b/Smarcd2. Intrinsic E3 ligase activity has not been proven. This Mus musculus (Mouse) protein is Putative E3 ubiquitin-protein ligase UNKL (Unkl).